A 309-amino-acid polypeptide reads, in one-letter code: Branched-chain-amino-acid aminotransferase (309 aa).

Lys-160 carries the N6-(pyridoxal phosphate)lysine modification.

The protein belongs to the class-IV pyridoxal-phosphate-dependent aminotransferase family. In terms of assembly, homohexamer. It depends on pyridoxal 5'-phosphate as a cofactor.

It catalyses the reaction L-leucine + 2-oxoglutarate = 4-methyl-2-oxopentanoate + L-glutamate. The enzyme catalyses L-isoleucine + 2-oxoglutarate = (S)-3-methyl-2-oxopentanoate + L-glutamate. It carries out the reaction L-valine + 2-oxoglutarate = 3-methyl-2-oxobutanoate + L-glutamate. It functions in the pathway amino-acid biosynthesis; L-isoleucine biosynthesis; L-isoleucine from 2-oxobutanoate: step 4/4. The protein operates within amino-acid biosynthesis; L-leucine biosynthesis; L-leucine from 3-methyl-2-oxobutanoate: step 4/4. Its pathway is amino-acid biosynthesis; L-valine biosynthesis; L-valine from pyruvate: step 4/4. In terms of biological role, acts on leucine, isoleucine and valine. The sequence is that of Branched-chain-amino-acid aminotransferase (ilvE) from Escherichia coli O157:H7.